We begin with the raw amino-acid sequence, 217 residues long: Urease accessory protein UreG (217 aa).

The segment covering 1 to 18 (MNAPHHPAHSTVRTKKLP) has biased composition (basic residues). The segment at 1–24 (MNAPHHPAHSTVRTKKLPPLRVGV) is disordered. Residue 26 to 33 (GPVGSGKT) participates in GTP binding.

Belongs to the SIMIBI class G3E GTPase family. UreG subfamily. Homodimer. UreD, UreF and UreG form a complex that acts as a GTP-hydrolysis-dependent molecular chaperone, activating the urease apoprotein by helping to assemble the nickel containing metallocenter of UreC. The UreE protein probably delivers the nickel.

Its subcellular location is the cytoplasm. In terms of biological role, facilitates the functional incorporation of the urease nickel metallocenter. This process requires GTP hydrolysis, probably effectuated by UreG. The sequence is that of Urease accessory protein UreG from Paraburkholderia xenovorans (strain LB400).